Consider the following 313-residue polypeptide: Maintenance of mitochondrial morphology protein 1 (313 aa).

At 1-12 (MIHLPQGSFTQG) the chain is on the lumenal side. A helical membrane pass occupies residues 13–33 (LIVGQLLTLAIIYVFLRFFLF). The Cytoplasmic segment spans residues 34-313 (CSPIPKSVAN…APQEESSNED (280 aa)). Residues 42–63 (ANSPKQTGNETPDETPSTPLSN) show a composition bias toward polar residues. A disordered region spans residues 42–65 (ANSPKQTGNETPDETPSTPLSNNK). The 199-residue stretch at 90–288 (EPESLDWFNV…SPQFQQIAIP (199 aa)) folds into the SMP-LTD domain.

The protein belongs to the MMM1 family. In terms of assembly, homodimer. Component of the ER-mitochondria encounter structure (ERMES) or MDM complex, composed of mmm1, mdm10, mdm12 and mdm34. A mmm1 homodimer associates with one molecule of mdm12 on each side in a pairwise head-to-tail manner, and the SMP-LTD domains of mmm1 and mdm12 generate a continuous hydrophobic tunnel for phospholipid trafficking.

It localises to the endoplasmic reticulum membrane. Its function is as follows. Component of the ERMES/MDM complex, which serves as a molecular tether to connect the endoplasmic reticulum (ER) and mitochondria. Components of this complex are involved in the control of mitochondrial shape and protein biogenesis, and function in nonvesicular lipid trafficking between the ER and mitochondria. The mdm12-mmm1 subcomplex functions in the major beta-barrel assembly pathway that is responsible for biogenesis of all outer membrane beta-barrel proteins, and acts in a late step after the SAM complex. The mdm10-mdm12-mmm1 subcomplex further acts in the TOM40-specific pathway after the action of the mdm12-mmm1 complex. Essential for establishing and maintaining the structure of mitochondria and maintenance of mtDNA nucleoids. The protein is Maintenance of mitochondrial morphology protein 1 of Schizosaccharomyces pombe (strain 972 / ATCC 24843) (Fission yeast).